Reading from the N-terminus, the 122-residue chain is MIQMQSRLDVADNTGAKSVMCIKVLGGSKRRYAGIGDVIKVSIKDAAPRGRVKKGEVYNAVVVRTAKGVRRQDGSLVKFDGNAAVLLNAKLEPIGTRIFGPVTRELRTERFMKIVSLAPEVL.

This sequence belongs to the universal ribosomal protein uL14 family. As to quaternary structure, part of the 50S ribosomal subunit. Forms a cluster with proteins L3 and L19. In the 70S ribosome, L14 and L19 interact and together make contacts with the 16S rRNA in bridges B5 and B8.

Functionally, binds to 23S rRNA. Forms part of two intersubunit bridges in the 70S ribosome. This is Large ribosomal subunit protein uL14 from Leptothrix cholodnii (strain ATCC 51168 / LMG 8142 / SP-6) (Leptothrix discophora (strain SP-6)).